A 313-amino-acid chain; its full sequence is Glyoxylate/hydroxypyruvate reductase A HPR2 (313 aa).

Residues 152-155, 174-176, 230-232, and aspartate 256 contribute to the NADP(+) site; these read LGRI, SRT, and IGR. The active site involves arginine 232. Residue glutamate 261 is part of the active site. Histidine 279 (proton donor) is an active-site residue. 279 to 281 contacts NADP(+); that stretch reads HVG.

The protein belongs to the D-isomer specific 2-hydroxyacid dehydrogenase family. GyaR subfamily. In terms of assembly, homodimer.

The protein resides in the cytoplasm. The catalysed reaction is glycolate + NADP(+) = glyoxylate + NADPH + H(+). It carries out the reaction (R)-glycerate + NAD(+) = 3-hydroxypyruvate + NADH + H(+). It catalyses the reaction (R)-glycerate + NADP(+) = 3-hydroxypyruvate + NADPH + H(+). Strongly inhibited by oxalate. Its function is as follows. Catalyzes the NADPH-dependent reduction of glyoxylate and hydroxypyruvate (HP) into glycolate and glycerate in the cytoplasm, thus providing a cytosolic bypass to the photorespiratory core cycle. Mostly active in the presence of NADPH and hydroxypyruvate. The protein is Glyoxylate/hydroxypyruvate reductase A HPR2 (HPR2) of Arabidopsis thaliana (Mouse-ear cress).